Reading from the N-terminus, the 104-residue chain is UPF0145 protein DET1617 (104 aa).

Belongs to the UPF0145 family.

The protein is UPF0145 protein DET1617 of Dehalococcoides mccartyi (strain ATCC BAA-2266 / KCTC 15142 / 195) (Dehalococcoides ethenogenes (strain 195)).